The sequence spans 120 residues: Basic phospholipase A2 homolog piratoxin-3 (120 aa).

Cystine bridges form between C26–C113, C28–C44, C43–C94, C49–C120, C50–C87, C57–C81, and C75–C85. The interval 104-115 (KKYRYHLKPCKK) is important for membrane-damaging activities in eukaryotes and bacteria; heparin-binding.

Belongs to the phospholipase A2 family. Group II subfamily. D49 sub-subfamily. As to quaternary structure, homodimer; non-covalently linked (probable alternative/compact dimer conformation). Expressed by the venom gland.

It localises to the secreted. In terms of biological role, snake venom phospholipase A2 (PLA2) that lacks enzymatic activity. Shows high myotoxin activities. Also has anticoagulant activity. A model of myotoxic mechanism has been proposed: an apo Lys49-PLA2 is activated by the entrance of a hydrophobic molecule (e.g. fatty acid) at the hydrophobic channel of the protein leading to a reorientation of a monomer. This reorientation causes a transition between 'inactive' to 'active' states, causing alignment of C-terminal and membrane-docking sites (MDoS) side-by-side and putting the membrane-disruption sites (MDiS) in the same plane, exposed to solvent and in a symmetric position for both monomers. The MDoS region stabilizes the toxin on membrane by the interaction of charged residues with phospholipid head groups. Subsequently, the MDiS region destabilizes the membrane with penetration of hydrophobic residues. This insertion causes a disorganization of the membrane, allowing an uncontrolled influx of ions (i.e. calcium and sodium), and eventually triggering irreversible intracellular alterations and cell death. The sequence is that of Basic phospholipase A2 homolog piratoxin-3 from Bothrops pirajai (Piraja's lancehead).